The following is a 347-amino-acid chain: Ketol-acid reductoisomerase (NADP(+)) (347 aa).

One can recognise a KARI N-terminal Rossmann domain in the interval 3-182 (TKMFYDKDID…GSGCAGILET (180 aa)). NADP(+) contacts are provided by residues 26 to 29 (YGAQ), Arg49, Ser53, and 83 to 86 (DELQ). Residue His108 is part of the active site. An NADP(+)-binding site is contributed by Gly134. Positions 183–328 (TFEEETTEDL…KKVRAMMPWI (146 aa)) constitute a KARI C-terminal knotted domain. 4 residues coordinate Mg(2+): Asp191, Glu195, Glu227, and Glu231. A substrate-binding site is contributed by Ser252.

It belongs to the ketol-acid reductoisomerase family. Requires Mg(2+) as cofactor.

It catalyses the reaction (2R)-2,3-dihydroxy-3-methylbutanoate + NADP(+) = (2S)-2-acetolactate + NADPH + H(+). The enzyme catalyses (2R,3R)-2,3-dihydroxy-3-methylpentanoate + NADP(+) = (S)-2-ethyl-2-hydroxy-3-oxobutanoate + NADPH + H(+). Its pathway is amino-acid biosynthesis; L-isoleucine biosynthesis; L-isoleucine from 2-oxobutanoate: step 2/4. It functions in the pathway amino-acid biosynthesis; L-valine biosynthesis; L-valine from pyruvate: step 2/4. Its function is as follows. Involved in the biosynthesis of branched-chain amino acids (BCAA). Catalyzes an alkyl-migration followed by a ketol-acid reduction of (S)-2-acetolactate (S2AL) to yield (R)-2,3-dihydroxy-isovalerate. In the isomerase reaction, S2AL is rearranged via a Mg-dependent methyl migration to produce 3-hydroxy-3-methyl-2-ketobutyrate (HMKB). In the reductase reaction, this 2-ketoacid undergoes a metal-dependent reduction by NADPH to yield (R)-2,3-dihydroxy-isovalerate. The chain is Ketol-acid reductoisomerase (NADP(+)) from Leuconostoc mesenteroides subsp. cremoris.